Reading from the N-terminus, the 714-residue chain is Mitochondrial division protein 1 (714 aa).

A coiled-coil region spans residues 240 to 298 (LNIQKNSTLSEIRDIEVEVENLRQKKEKLLGKIANIEQNQLLLEDNLKQIDDRLDFLEE). The tract at residues 323–354 (LKNDAIRNEGVTTESISSEASNLPPRRRQQLR) is disordered. Positions 332 to 343 (GVTTESISSEAS) are enriched in polar residues. Position 376 is a phosphoserine (Ser-376). WD repeat units follow at residues 396 to 436 (THDD…KIGE), 439 to 478 (GHLA…QLYQ), 500 to 539 (AHTD…QTID), 561 to 603 (TQRN…RTLK), 604 to 642 (GHTD…NKFH), 644 to 681 (YSAP…SWSC), and 685 to 714 (GNET…IWAV).

This sequence belongs to the WD repeat MDV1/CAF4 family. In terms of assembly, interacts with CAF4, DNM1 and FIS1, components of the mitochondrial fission machinery. Interacts via its N-terminal, coiled-coil extension (NTE) with FIS1, and via its WD repeats with DNM1.

It is found in the mitochondrion outer membrane. Functionally, involved in mitochondrial fission. Has a partially redundant function to CAF4 in acting as an adapter protein, binding to FIS1 on the mitochondrial outer membrane and recruiting the dynamin-like GTPase DNM1 to form mitochondrial fission complexes. Formation of these complexes is required to promote constriction and fission of the mitochondrial compartment at a late step in mitochondrial division. This chain is Mitochondrial division protein 1 (MDV1), found in Saccharomyces cerevisiae (strain ATCC 204508 / S288c) (Baker's yeast).